We begin with the raw amino-acid sequence, 311 residues long: Malate dehydrogenase (311 aa).

Residues 7 to 13 (GAAGGIG) and Asp-34 contribute to the NAD(+) site. Residues Arg-81 and Arg-87 each coordinate substrate. NAD(+)-binding positions include Asn-94 and 117–119 (ITN). Substrate-binding residues include Asn-119 and Arg-153. The Proton acceptor role is filled by His-177. Met-227 lines the NAD(+) pocket.

Belongs to the LDH/MDH superfamily. MDH type 1 family. Homodimer.

It carries out the reaction (S)-malate + NAD(+) = oxaloacetate + NADH + H(+). Catalyzes the reversible oxidation of malate to oxaloacetate. The sequence is that of Malate dehydrogenase from Histophilus somni (strain 2336) (Haemophilus somnus).